Here is a 164-residue protein sequence, read N- to C-terminus: UPF0114 protein YqhA (164 aa).

Transmembrane regions (helical) follow at residues 15 to 35, 53 to 73, and 136 to 156; these read LLAP…LKFF, LILV…LVMV, and LMWY…MGYL.

Belongs to the UPF0114 family.

Its subcellular location is the cell membrane. In Escherichia coli O139:H28 (strain E24377A / ETEC), this protein is UPF0114 protein YqhA.